The following is a 226-amino-acid chain: Putative pyridoxamine 5'-phosphate oxidase (226 aa).

Position 16–19 (leucine 16–histidine 19) interacts with pyridoxal 5'-phosphate. Arginine 72 to leucine 75 contacts FMN. Lysine 77 lines the pyridoxal 5'-phosphate pocket. FMN contacts are provided by residues tyrosine 87 to threonine 88, arginine 93 to lysine 94, and glutamine 116. Residues tyrosine 134, arginine 138, and serine 142 each coordinate pyridoxal 5'-phosphate. FMN contacts are provided by residues glutamine 151–serine 152 and tryptophan 199. Arginine 205–histidine 207 contacts pyridoxal 5'-phosphate. Arginine 209 serves as a coordination point for FMN.

The protein belongs to the pyridoxamine 5'-phosphate oxidase family. As to quaternary structure, homodimer. The cofactor is FMN.

It carries out the reaction pyridoxamine 5'-phosphate + O2 + H2O = pyridoxal 5'-phosphate + H2O2 + NH4(+). It catalyses the reaction pyridoxine 5'-phosphate + O2 = pyridoxal 5'-phosphate + H2O2. It participates in cofactor metabolism; pyridoxal 5'-phosphate salvage; pyridoxal 5'-phosphate from pyridoxamine 5'-phosphate: step 1/1. Its pathway is cofactor metabolism; pyridoxal 5'-phosphate salvage; pyridoxal 5'-phosphate from pyridoxine 5'-phosphate: step 1/1. Functionally, catalyzes the oxidation of either pyridoxine 5'-phosphate (PNP) or pyridoxamine 5'-phosphate (PMP) into pyridoxal 5'-phosphate (PLP). The polypeptide is Putative pyridoxamine 5'-phosphate oxidase (Caenorhabditis elegans).